The sequence spans 432 residues: Trigger factor (432 aa).

The region spanning 161 to 246 (EDRVTIDFTG…LKKVEERELP (86 aa)) is the PPIase FKBP-type domain.

It belongs to the FKBP-type PPIase family. Tig subfamily.

It localises to the cytoplasm. The enzyme catalyses [protein]-peptidylproline (omega=180) = [protein]-peptidylproline (omega=0). Its function is as follows. Involved in protein export. Acts as a chaperone by maintaining the newly synthesized protein in an open conformation. Functions as a peptidyl-prolyl cis-trans isomerase. The polypeptide is Trigger factor (Klebsiella pneumoniae subsp. pneumoniae (strain ATCC 700721 / MGH 78578)).